The chain runs to 22 residues: thr operon leader peptide (22 aa).

This sequence belongs to the thr operon leader peptide family.

This protein is involved in control of the biosynthesis of threonine. The polypeptide is thr operon leader peptide (Yersinia pestis bv. Antiqua (strain Antiqua)).